The chain runs to 153 residues: Ribosomal RNA large subunit methyltransferase H (153 aa).

Residues Leu-75, Gly-102, and 121–126 contribute to the S-adenosyl-L-methionine site; that span reads LSPLTM.

This sequence belongs to the RNA methyltransferase RlmH family. As to quaternary structure, homodimer.

The protein localises to the cytoplasm. It carries out the reaction pseudouridine(1915) in 23S rRNA + S-adenosyl-L-methionine = N(3)-methylpseudouridine(1915) in 23S rRNA + S-adenosyl-L-homocysteine + H(+). In terms of biological role, specifically methylates the pseudouridine at position 1915 (m3Psi1915) in 23S rRNA. This chain is Ribosomal RNA large subunit methyltransferase H, found in Nitratiruptor sp. (strain SB155-2).